The chain runs to 1395 residues: Little elongation complex subunit 1 (1395 aa).

Disordered regions lie at residues 175–212 (IDVSVPTPKSPNSRSKRKAHQPGVNQSTQTDEEPADPK), 452–496 (GTDP…PKPI), 561–588 (ENKGNVRVQDPDDLKSPAQTSKFPKSEN), 658–680 (NKPSEMEVNASEGTDSHLDKSVS), 707–786 (PELS…ASSG), 841–872 (ISQPEEPPLTVPIAAKRRRTQSELKTLSPPGE), and 908–936 (AINKSEPFKKDSTHDSKKDSTHDLKPLEH). Basic residues predominate over residues 478 to 489 (KERKRKSKKRKA). Acidic residues predominate over residues 710-720 (SDSDDTFDNSE). Positions 721–731 (EDCRSADEPSN) are enriched in basic and acidic residues. Acidic residues predominate over residues 745–762 (SESDESEERALEADDLTE). The stretch at 748–778 (DESEERALEADDLTEAEAKVEEKESEQKSSD) forms a coiled coil. The segment covering 763-776 (AEAKVEEKESEQKS) has biased composition (basic and acidic residues). Residues 913-936 (EPFKKDSTHDSKKDSTHDLKPLEH) show a composition bias toward basic and acidic residues.

Belongs to the ICE1 family. As to quaternary structure, component of the little elongation complex (LEC), at least composed of Ell, Eaf, Ice1 and Ice2.

The protein resides in the nucleus. Its function is as follows. Component of the little elongation complex (LEC), a complex required to regulate small nuclear RNA (snRNA) gene transcription by RNA polymerase II and III. Specifically acts as a scaffold protein that promotes the LEC complex formation and recruitment and RNA polymerase II occupancy at snRNA genes in subnuclear bodies. In Drosophila melanogaster (Fruit fly), this protein is Little elongation complex subunit 1 (Ice1).